A 60-amino-acid chain; its full sequence is Small ribosomal subunit protein bS21 (60 aa).

The tract at residues 38 to 60 (KGVKRREKEKAARKRLQKKHRMY) is disordered.

The protein belongs to the bacterial ribosomal protein bS21 family.

The polypeptide is Small ribosomal subunit protein bS21 (Mycoplasmoides gallisepticum (strain R(low / passage 15 / clone 2)) (Mycoplasma gallisepticum)).